Here is a 75-residue protein sequence, read N- to C-terminus: Putative membrane protein insertion efficiency factor (75 aa).

Belongs to the UPF0161 family.

It localises to the cell inner membrane. Its function is as follows. Could be involved in insertion of integral membrane proteins into the membrane. The chain is Putative membrane protein insertion efficiency factor from Leptospira biflexa serovar Patoc (strain Patoc 1 / ATCC 23582 / Paris).